Reading from the N-terminus, the 476-residue chain is UDP-N-acetylmuramate--L-alanine ligase (476 aa).

ATP is bound at residue 125 to 131 (GTHGKTT).

Belongs to the MurCDEF family.

The protein localises to the cytoplasm. The enzyme catalyses UDP-N-acetyl-alpha-D-muramate + L-alanine + ATP = UDP-N-acetyl-alpha-D-muramoyl-L-alanine + ADP + phosphate + H(+). Its pathway is cell wall biogenesis; peptidoglycan biosynthesis. Functionally, cell wall formation. This Actinobacillus succinogenes (strain ATCC 55618 / DSM 22257 / CCUG 43843 / 130Z) protein is UDP-N-acetylmuramate--L-alanine ligase.